A 614-amino-acid polypeptide reads, in one-letter code: DNA mismatch repair protein MutL (614 aa).

It belongs to the DNA mismatch repair MutL/HexB family.

This protein is involved in the repair of mismatches in DNA. It is required for dam-dependent methyl-directed DNA mismatch repair. May act as a 'molecular matchmaker', a protein that promotes the formation of a stable complex between two or more DNA-binding proteins in an ATP-dependent manner without itself being part of a final effector complex. This Leptospira biflexa serovar Patoc (strain Patoc 1 / ATCC 23582 / Paris) protein is DNA mismatch repair protein MutL.